A 447-amino-acid chain; its full sequence is Dihydrolipoyllysine-residue acetyltransferase component of pyruvate dehydrogenase complex (447 aa).

Residues 2–78 (PINITMPALS…KVNALIAVLA (77 aa)) enclose the Lipoyl-binding domain. Lysine 43 is modified (N6-lipoyllysine). The tract at residues 91–140 (GNGAAGAVPAPKPKETAETAPAAAPAPAAAPAPQAAAPASPAPADGEGKR) is disordered. A compositionally biased stretch (low complexity) spans 108–134 (ETAPAAAPAPAAAPAPQAAAPASPAPA). One can recognise a Peripheral subunit-binding (PSBD) domain in the interval 142 to 179 (FSSPLARRLAKEAGIDLSAIAGSGPHGRVVKKDVETAV). Histidine 420 is a catalytic residue.

It belongs to the 2-oxoacid dehydrogenase family. As to quaternary structure, forms a 24-polypeptide structural core with octahedral symmetry. (R)-lipoate is required as a cofactor.

It carries out the reaction N(6)-[(R)-dihydrolipoyl]-L-lysyl-[protein] + acetyl-CoA = N(6)-[(R)-S(8)-acetyldihydrolipoyl]-L-lysyl-[protein] + CoA. In terms of biological role, the pyruvate dehydrogenase complex catalyzes the overall conversion of pyruvate to acetyl-CoA and CO(2). It contains multiple copies of three enzymatic components: pyruvate dehydrogenase (E1), dihydrolipoamide acetyltransferase (E2) and lipoamide dehydrogenase (E3). The chain is Dihydrolipoyllysine-residue acetyltransferase component of pyruvate dehydrogenase complex (pdhC) from Rhizobium meliloti (strain 1021) (Ensifer meliloti).